A 284-amino-acid chain; its full sequence is Nucleotide-binding protein Pput_0988 (284 aa).

Residue 8-15 (GRSGSGKS) participates in ATP binding. A GTP-binding site is contributed by 60–63 (DARN).

It belongs to the RapZ-like family.

In terms of biological role, displays ATPase and GTPase activities. This chain is Nucleotide-binding protein Pput_0988, found in Pseudomonas putida (strain ATCC 700007 / DSM 6899 / JCM 31910 / BCRC 17059 / LMG 24140 / F1).